The primary structure comprises 249 residues: Orotidine 5'-phosphate decarboxylase (249 aa).

Substrate-binding positions include D18, K40, 67–76 (DLKYHDIPNT), T127, R188, Q197, G217, and R218. The active-site Proton donor is the K69.

Belongs to the OMP decarboxylase family. Type 1 subfamily. In terms of assembly, homodimer.

It carries out the reaction orotidine 5'-phosphate + H(+) = UMP + CO2. The protein operates within pyrimidine metabolism; UMP biosynthesis via de novo pathway; UMP from orotate: step 2/2. In terms of biological role, catalyzes the decarboxylation of orotidine 5'-monophosphate (OMP) to uridine 5'-monophosphate (UMP). In Baumannia cicadellinicola subsp. Homalodisca coagulata, this protein is Orotidine 5'-phosphate decarboxylase.